We begin with the raw amino-acid sequence, 433 residues long: Enolase (433 aa).

Gln-167 is a binding site for (2R)-2-phosphoglycerate. Glu-209 acts as the Proton donor in catalysis. The Mg(2+) site is built by Asp-246, Glu-291, and Asp-318. Residues Lys-343, Arg-372, Ser-373, and Lys-394 each contribute to the (2R)-2-phosphoglycerate site. Lys-343 acts as the Proton acceptor in catalysis.

It belongs to the enolase family. As to quaternary structure, component of the RNA degradosome, a multiprotein complex involved in RNA processing and mRNA degradation. The cofactor is Mg(2+).

It localises to the cytoplasm. It is found in the secreted. The protein localises to the cell surface. The enzyme catalyses (2R)-2-phosphoglycerate = phosphoenolpyruvate + H2O. The protein operates within carbohydrate degradation; glycolysis; pyruvate from D-glyceraldehyde 3-phosphate: step 4/5. Its function is as follows. Catalyzes the reversible conversion of 2-phosphoglycerate (2-PG) into phosphoenolpyruvate (PEP). It is essential for the degradation of carbohydrates via glycolysis. The chain is Enolase from Tolumonas auensis (strain DSM 9187 / NBRC 110442 / TA 4).